Reading from the N-terminus, the 666-residue chain is tRNA 5-methylaminomethyl-2-thiouridine biosynthesis bifunctional protein MnmC (666 aa).

A tRNA (mnm(5)s(2)U34)-methyltransferase region spans residues 1–253; sequence MSSPFVPIIT…KRHMICAHYE (253 aa). The tract at residues 283–666 is FAD-dependent cmnm(5)s(2)U34 oxidoreductase; sequence VGGGLAGCFI…FLRKKIIQGP (384 aa).

In the N-terminal section; belongs to the methyltransferase superfamily. tRNA (mnm(5)s(2)U34)-methyltransferase family. It in the C-terminal section; belongs to the DAO family. Requires FAD as cofactor.

The protein resides in the cytoplasm. It carries out the reaction 5-aminomethyl-2-thiouridine(34) in tRNA + S-adenosyl-L-methionine = 5-methylaminomethyl-2-thiouridine(34) in tRNA + S-adenosyl-L-homocysteine + H(+). Functionally, catalyzes the last two steps in the biosynthesis of 5-methylaminomethyl-2-thiouridine (mnm(5)s(2)U) at the wobble position (U34) in tRNA. Catalyzes the FAD-dependent demodification of cmnm(5)s(2)U34 to nm(5)s(2)U34, followed by the transfer of a methyl group from S-adenosyl-L-methionine to nm(5)s(2)U34, to form mnm(5)s(2)U34. The sequence is that of tRNA 5-methylaminomethyl-2-thiouridine biosynthesis bifunctional protein MnmC from Legionella pneumophila (strain Lens).